Consider the following 420-residue polypeptide: Serine hydroxymethyltransferase (420 aa).

(6S)-5,6,7,8-tetrahydrofolate is bound by residues L121 and 125–127 (GHL). K229 is modified (N6-(pyridoxal phosphate)lysine).

It belongs to the SHMT family. As to quaternary structure, homodimer. The cofactor is pyridoxal 5'-phosphate.

The protein resides in the cytoplasm. It catalyses the reaction (6R)-5,10-methylene-5,6,7,8-tetrahydrofolate + glycine + H2O = (6S)-5,6,7,8-tetrahydrofolate + L-serine. It functions in the pathway one-carbon metabolism; tetrahydrofolate interconversion. The protein operates within amino-acid biosynthesis; glycine biosynthesis; glycine from L-serine: step 1/1. Catalyzes the reversible interconversion of serine and glycine with tetrahydrofolate (THF) serving as the one-carbon carrier. This reaction serves as the major source of one-carbon groups required for the biosynthesis of purines, thymidylate, methionine, and other important biomolecules. Also exhibits THF-independent aldolase activity toward beta-hydroxyamino acids, producing glycine and aldehydes, via a retro-aldol mechanism. This is Serine hydroxymethyltransferase from Wigglesworthia glossinidia brevipalpis.